The sequence spans 362 residues: Peptide chain release factor 1 (362 aa).

Position 240 is an N5-methylglutamine (Gln240).

It belongs to the prokaryotic/mitochondrial release factor family. Methylated by PrmC. Methylation increases the termination efficiency of RF1.

It localises to the cytoplasm. Its function is as follows. Peptide chain release factor 1 directs the termination of translation in response to the peptide chain termination codons UAG and UAA. This is Peptide chain release factor 1 from Bifidobacterium adolescentis (strain ATCC 15703 / DSM 20083 / NCTC 11814 / E194a).